We begin with the raw amino-acid sequence, 127 residues long: MORF4 family-associated protein 1-like 1 (127 aa).

The stretch at 87-118 (GEADERVSELCEKAEEKAKEIAKMAEMLVELV) forms a coiled coil.

Belongs to the MORF4 family-associated protein family.

This chain is MORF4 family-associated protein 1-like 1 (MRFAP1L1), found in Homo sapiens (Human).